Reading from the N-terminus, the 265-residue chain is Lysosomal membrane ascorbate-dependent ferrireductase CYB561A3 (265 aa).

At 1–2 (MA) the chain is on the cytoplasmic side. The helical transmembrane segment at 3–23 (VGWFYLSVLALCSLGSMCILF) threads the bilayer. The Cytochrome b561 domain maps to 12–219 (ALCSLGSMCI…FGLLVLYILL (208 aa)). Over 24–45 (TIYWMRYWHGGFAWDGSMLMFN) the chain is Lumenal. The helical transmembrane segment at 46 to 66 (WHPVLMVTGMVVLYSAASLVY) threads the bilayer. Heme b-binding residues include His-47 and Arg-67. The Cytoplasmic segment spans residues 67 to 83 (RLPQSWVGPRLPWKSGH). L-ascorbate is bound by residues Arg-76 and Lys-80. His-83 serves as a coordination point for heme b. The chain crosses the membrane as a helical span at residues 84-104 (AAMHLLAFLLTVLGLHAVFEF). The Lumenal segment spans residues 105–119 (HNHAKIPHLYSLHSW). Heme b is bound by residues 112–115 (HLYS) and His-117. A helical membrane pass occupies residues 120-140 (LGITTVFLFACQWFLGFSVFL). Topologically, residues 141-154 (LPWASMWLRSLLKP) are cytoplasmic. Arg-149 contributes to the L-ascorbate binding site. A helical transmembrane segment spans residues 155-175 (IHVFFGASILSLAIASVVSGI). His-156 and Glu-177 together coordinate heme b. Over 176 to 197 (NEKLFFSLKNGTKTYSNLPSEA) the chain is Lumenal. An N-linked (GlcNAc...) asparagine glycan is attached at Asn-185. Residues 198–218 (VFANCAGMLVVVFGLLVLYIL) traverse the membrane as a helical segment. Over 219-265 (LASSWKRPEPGMQAEREPTRTRGRAGTPEVMLEGERGLAEPLLQKRS) the chain is Cytoplasmic. A heme b-binding site is contributed by Lys-224. Residues 228–238 (PGMQAEREPTR) show a composition bias toward basic and acidic residues. Residues 228-265 (PGMQAEREPTRTRGRAGTPEVMLEGERGLAEPLLQKRS) are disordered.

Homodimer. Requires heme b as cofactor. In terms of processing, N-glycosylated.

Its subcellular location is the late endosome membrane. It is found in the lysosome membrane. It carries out the reaction Fe(3+)(out) + L-ascorbate(in) = monodehydro-L-ascorbate radical(in) + Fe(2+)(out) + H(+). In terms of biological role, transmembrane reductase that uses ascorbate as an electron donor in the cytoplasm and transfers electrons across membranes to reduce iron cations Fe(3+) into Fe(2+) in the lumen of the late endosome and lysosome. Reduced iron can then be extruded from the late endosome and lysosome to the cytoplasm by divalent metal-specific transporters. It is therefore most probably involved in endosomal and lysosomal cellular iron homeostasis. The polypeptide is Lysosomal membrane ascorbate-dependent ferrireductase CYB561A3 (Bos taurus (Bovine)).